The primary structure comprises 2359 residues: Pre-mRNA-processing-splicing factor 8A (2359 aa).

The disordered stretch occupies residues 1 to 54; sequence MWNNNDGMPLAPPGTGGSMMPPPPAAHPSYTALPPPSNPTPPVEPTPEEAEAKL. The segment covering 33 to 45 has biased composition (pro residues); sequence LPPPSNPTPPVEP. The 132-residue stretch at 2127–2258 folds into the MPN domain; that stretch reads TYIMPKNILK…LTSYKLTQTG (132 aa).

Interacts with CLO.

It localises to the nucleus. Its function is as follows. Functions as a scaffold that mediates the ordered assembly of spliceosomal proteins and snRNAs. Required for the assembly of the U4/U6-U5 tri-snRNP complex. Required for embryo development. Required for splicing efficiency of COOLAIR introns and usage of the proximal poly(A) site. COOLAIR is a set of long non-coding antisense transcripts produced at the FLOWERING LOCUS C (FLC). COOLAIR initiates just downstream of the major sense transcript poly(A) site and terminates either early or extends into the FLC promoter region. Splicing of COOLAIR by PRP8A is functionally important for FLC regulation. The protein is Pre-mRNA-processing-splicing factor 8A of Arabidopsis thaliana (Mouse-ear cress).